Consider the following 61-residue polypeptide: Small ribosomal subunit protein uS14B (61 aa).

The Zn(2+) site is built by cysteine 24, cysteine 27, cysteine 40, and cysteine 43.

Belongs to the universal ribosomal protein uS14 family. Zinc-binding uS14 subfamily. As to quaternary structure, part of the 30S ribosomal subunit. Contacts proteins S3 and S10. The cofactor is Zn(2+).

Its function is as follows. Binds 16S rRNA, required for the assembly of 30S particles and may also be responsible for determining the conformation of the 16S rRNA at the A site. This Mycolicibacterium smegmatis (strain ATCC 700084 / mc(2)155) (Mycobacterium smegmatis) protein is Small ribosomal subunit protein uS14B.